The following is a 251-amino-acid chain: HTH-type transcriptional regulator IolR (251 aa).

The HTH deoR-type domain maps to 1-57 (MKLMRIQEMEEYILSHGTVSLDELCQVFNVSKNTVRRDINKLTEKGAIEKVYGGVTS). The H-T-H motif DNA-binding region spans 19-38 (VSLDELCQVFNVSKNTVRRD).

In terms of biological role, iol operon repressor. This Bacillus subtilis (strain 168) protein is HTH-type transcriptional regulator IolR (iolR).